Consider the following 101-residue polypeptide: UPF0235 protein CJA_0091 (101 aa).

This sequence belongs to the UPF0235 family.

The chain is UPF0235 protein CJA_0091 from Cellvibrio japonicus (strain Ueda107) (Pseudomonas fluorescens subsp. cellulosa).